Reading from the N-terminus, the 377-residue chain is Molybdenum import ATP-binding protein ModC (377 aa).

An ABC transporter domain is found at 17–254 (ITGDEAIRAR…LDLPFAHDED (238 aa)). An ATP-binding site is contributed by 52-59 (GHSGSGKT). One can recognise a Mop domain in the interval 313 to 377 (DSSILNVLPA…AQVKGVALLR (65 aa)).

This sequence belongs to the ABC transporter superfamily. Molybdate importer (TC 3.A.1.8) family. As to quaternary structure, the complex is composed of two ATP-binding proteins (ModC), two transmembrane proteins (ModB) and a solute-binding protein (ModA).

The protein localises to the cell inner membrane. It carries out the reaction molybdate(out) + ATP + H2O = molybdate(in) + ADP + phosphate + H(+). Functionally, part of the ABC transporter complex ModABC involved in molybdenum import. Responsible for energy coupling to the transport system. The polypeptide is Molybdenum import ATP-binding protein ModC (Aromatoleum aromaticum (strain DSM 19018 / LMG 30748 / EbN1) (Azoarcus sp. (strain EbN1))).